A 137-amino-acid polypeptide reads, in one-letter code: Histone H2B (137 aa).

A compositionally biased stretch (basic and acidic residues) spans 1-10 (MPPKAADKKP). Residues 1–45 (MPPKAADKKPANKAPATASKAPEKKDAGKKTAASGEKKKRTKARK) are disordered. N6-acetyllysine; alternate occurs at positions 8 and 9. Glycyl lysine isopeptide (Lys-Gly) (interchain with G-Cter in SUMO); alternate cross-links involve residues Lys8 and Lys9. Lys13 is modified (N6-acetyllysine). Position 24 is an N6-acetyllysine; alternate (Lys24). Lys24 is covalently cross-linked (Glycyl lysine isopeptide (Lys-Gly) (interchain with G-Cter in SUMO); alternate). Residue Lys25 forms a Glycyl lysine isopeptide (Lys-Gly) (interchain with G-Cter in SUMO) linkage. A Glycyl lysine isopeptide (Lys-Gly) (interchain with G-Cter in ubiquitin) cross-link involves residue Lys131.

It belongs to the histone H2B family. In terms of assembly, the nucleosome is a histone octamer containing two molecules each of H2A, H2B, H3 and H4 assembled in one H3-H4 heterotetramer and two H2A-H2B heterodimers. The octamer wraps approximately 147 bp of DNA. In terms of processing, monoubiquitinated to form H2BK123ub1. H2BK123ub1 gives a specific tag for epigenetic transcriptional activation and is also prerequisite for H3K4me and H3K79me formation. H2BK123ub1 also modulates the formation of double-strand breaks during meiosis and is a prerequisite for DNA-damage checkpoint activation. Post-translationally, acetylated by GCN5 to form H2BK11ac and H2BK16ac. H2BK16ac can also be formed by ESA1. Acetylation of N-terminal lysines and particularly formation of H2BK11acK16ac has a positive effect on transcription. Sumoylation to form H2BK6su or H2BK7su, and probably also H2BK16su or H2BK17su, occurs preferentially near the telomeres and represses gene transcription.

Its subcellular location is the nucleus. It is found in the chromosome. Functionally, core component of nucleosome. Nucleosomes wrap and compact DNA into chromatin, limiting DNA accessibility to the cellular machineries which require DNA as a template. Histones thereby play a central role in transcription regulation, DNA repair, DNA replication and chromosomal stability. DNA accessibility is regulated via a complex set of post-translational modifications of histones, also called histone code, and nucleosome remodeling. The chain is Histone H2B (HTB1) from Podospora anserina (Pleurage anserina).